We begin with the raw amino-acid sequence, 299 residues long: Acetylglutamate kinase (299 aa).

Residues 72-73 (GG), Arg94, and Asn196 each bind substrate.

This sequence belongs to the acetylglutamate kinase family. ArgB subfamily.

It localises to the cytoplasm. It carries out the reaction N-acetyl-L-glutamate + ATP = N-acetyl-L-glutamyl 5-phosphate + ADP. It participates in amino-acid biosynthesis; L-arginine biosynthesis; N(2)-acetyl-L-ornithine from L-glutamate: step 2/4. Catalyzes the ATP-dependent phosphorylation of N-acetyl-L-glutamate. This is Acetylglutamate kinase from Burkholderia cenocepacia (strain HI2424).